Here is a 125-residue protein sequence, read N- to C-terminus: MNDLKFTTTHEWLREDEEEVTVGITDHAQELLGDMVFVELPEIGDEVSAGQELGVVESVKAASDFYAPISGVVTAVNEAVGKNPALVNHDPYHEGWLVKLKPSHPDEIKSLLSDEQYQNEIAEEN.

One can recognise a Lipoyl-binding domain in the interval E19 to K101. K60 carries the post-translational modification N6-lipoyllysine.

This sequence belongs to the GcvH family. The glycine cleavage system is composed of four proteins: P, T, L and H. The cofactor is (R)-lipoate.

In terms of biological role, the glycine cleavage system catalyzes the degradation of glycine. The H protein shuttles the methylamine group of glycine from the P protein to the T protein. The protein is Glycine cleavage system H protein of Legionella pneumophila (strain Corby).